Reading from the N-terminus, the 1005-residue chain is Mitogen-activated protein kinase kinase kinase 10 (1005 aa).

One can recognise an SH3 domain in the interval 32–96; the sequence is VSNPLWMAVF…PSNYVVSDDK (65 aa). Residues 118–380 enclose the Protein kinase domain; the sequence is LNLDEIIGVG…SCILEQLTTI (263 aa). ATP-binding positions include 124–132 and K145; that span reads IGVGGFGKV. The active-site Proton acceptor is D242. Leucine-zipper regions lie at residues 404-425 and 439-460; these read IQQMFDELRTKEKELRSREEEL and LKRREQELAEREIDIVERELNI. Disordered stretches follow at residues 551–611, 647–676, 712–736, and 758–940; these read SVLK…KHTP, QSDHRSHPEDTAHAGAPSSDSPKRGSQSRR, FQWAGRGPRRRASSPSRSMSYGEDS, and RSLI…AEGA. Basic and acidic residues-rich tracts occupy residues 576–588 and 648–658; these read QKERVGGEERLKT and SDHRSHPEDTA. Basic and acidic residues-rich tracts occupy residues 761-786 and 799-809; these read IRSDSDDIGLDHDNVSSGRGVKEDRG and YKVESFKRDPK. The segment covering 810 to 826 has biased composition (polar residues); that stretch reads QSLTPTHVTVGRNNTTE. The segment covering 862–879 has biased composition (pro residues); that stretch reads EPSPFPRLPDPHFVFPPP. The segment covering 915–940 has biased composition (low complexity); it reads SLSQTHSSSPSSGGGDACSSGSAEGA.

The protein belongs to the protein kinase superfamily. STE Ser/Thr protein kinase family. MAP kinase kinase kinase subfamily. As to quaternary structure, homodimer. Binds to the GTPase rac1 but not cdc42 or rhoA. Interacts (via kinase domain) with pak1 (via kinase domain). Interacts with the ubiquitin-conjugating enzyme ube2d4. The cofactor is Mg(2+). Post-translationally, autophosphorylation on serine and threonine residues within the activation loop plays a role in enzyme activation. In terms of processing, mono- and poly-ubiquitinated. As to expression, in adults, strongly expressed in the brain and spleen with lower levels in pancreas, heart, muscle and kidney (at protein level). In the developing embryo, expressed at stage 22 in the cement gland. Weakly expressed in the pronephros from stage 24 or 25, with expression increasing in strength by stage 30 and continuing at least until stage 37. Expression in the developing pronephros correlates with epithelialization of the proximal pronephric tubules.

It carries out the reaction L-seryl-[protein] + ATP = O-phospho-L-seryl-[protein] + ADP + H(+). The enzyme catalyses L-threonyl-[protein] + ATP = O-phospho-L-threonyl-[protein] + ADP + H(+). Homodimerization via the leucine zipper domains is required for autophosphorylation and subsequent activation. Functionally, activates the JUN N-terminal pathway. Essential for pronephros and cement gland development. The polypeptide is Mitogen-activated protein kinase kinase kinase 10 (map3k10) (Xenopus laevis (African clawed frog)).